Consider the following 221-residue polypeptide: DDLPDSIDWRENGAVVPVKNQGGCGSCWAFSTVAAVEGINQIVTGDLISLSEQQLVDCTTANHGCRGGWMNPAFQFIVNNGGINSEETYPYRGQDGICNSTVNAPVVSIDSYENVPSHNEQSLQKAVANQPVSVTMDAAGRDFQLYRSGIFTGSCNISANHALTVVGYGTENDKDFWIVKNSWGKNWGESGYIRAERNIENPDGKCGITRFASYPVKKGTN.

2 cysteine pairs are disulfide-bonded: Cys24/Cys65 and Cys58/Cys98. Cys27 is an active-site residue. 2 N-linked (GlcNAc...) asparagine glycosylation sites follow: Asn99 and Asn156. Cysteines 155 and 206 form a disulfide. The active site involves His161.

This sequence belongs to the peptidase C1 family.

It catalyses the reaction Preferential cleavage of peptides with a proline residue at the P2 position.. Cysteine proteinase with a specific activity toward peptides with a proline residue at the P2 position. In Zingiber officinale (Ginger), this protein is Zingipain-2.